The chain runs to 556 residues: Oxygen-dependent choline dehydrogenase (556 aa).

4 to 33 (DYIIIGAGSAGNVLATRLTEDPNTTVLLLE) is a binding site for FAD. Residue His-473 is the Proton acceptor of the active site.

It belongs to the GMC oxidoreductase family. FAD serves as cofactor.

The catalysed reaction is choline + A = betaine aldehyde + AH2. It catalyses the reaction betaine aldehyde + NAD(+) + H2O = glycine betaine + NADH + 2 H(+). The protein operates within amine and polyamine biosynthesis; betaine biosynthesis via choline pathway; betaine aldehyde from choline (cytochrome c reductase route): step 1/1. Its function is as follows. Involved in the biosynthesis of the osmoprotectant glycine betaine. Catalyzes the oxidation of choline to betaine aldehyde and betaine aldehyde to glycine betaine at the same rate. The polypeptide is Oxygen-dependent choline dehydrogenase (Escherichia coli O17:K52:H18 (strain UMN026 / ExPEC)).